Consider the following 258-residue polypeptide: MKQFIVIGNWKMYKTFTETLNFFDEFAIEYKKFRKANPQLIPYIDNNVFGVAPSQCNLTAYFTNRVPELKLCSQNMSKNEEGAFTGEVSARMLQDINVSYALCGHSERRRYHTNHENDESTHLKIKQSVKYDITPIICIGESKEDRDAGRTEAAIHKQLQILLDEVNIHKVIIAYEPVWSIGTGITPTPEEVENVSALIHKLTSPEVPVLYGGSVNENNINDFTKLPNLNGFLVGSASLKIDKFLKLISVNSDGIMPK.

9–11 (NWK) provides a ligand contact to substrate. Catalysis depends on His-105, which acts as the Electrophile. Glu-176 functions as the Proton acceptor in the catalytic mechanism. Residues Gly-182 and Ser-214 each contribute to the substrate site.

It belongs to the triosephosphate isomerase family. Homodimer.

The protein localises to the cytoplasm. It carries out the reaction D-glyceraldehyde 3-phosphate = dihydroxyacetone phosphate. It functions in the pathway carbohydrate biosynthesis; gluconeogenesis. The protein operates within carbohydrate degradation; glycolysis; D-glyceraldehyde 3-phosphate from glycerone phosphate: step 1/1. Its function is as follows. Involved in the gluconeogenesis. Catalyzes stereospecifically the conversion of dihydroxyacetone phosphate (DHAP) to D-glyceraldehyde-3-phosphate (G3P). In Mycoplasmopsis agalactiae (strain NCTC 10123 / CIP 59.7 / PG2) (Mycoplasma agalactiae), this protein is Triosephosphate isomerase.